Here is a 348-residue protein sequence, read N- to C-terminus: Chemokine C-C motif receptor-like 2 (348 aa).

Residues 1 to 43 are Extracellular-facing; that stretch reads MANYTPAPEDDYDVFIEDDLSDDEIEPCTPYDPKILSAQLVPY. The helical transmembrane segment at 44–64 threads the bilayer; the sequence is LYTTVFMVGLLDNILVVFILV. Topologically, residues 65–76 are cytoplasmic; sequence KYKGLRQAENMS. The helical transmembrane segment at 77 to 97 threads the bilayer; the sequence is FLNLALSNLGFLLTLPFWAYA. The Extracellular segment spans residues 98–110; that stretch reads ASHGEGFDDPLCK. Cys109 and Cys187 are disulfide-bonded. A helical transmembrane segment spans residues 111–131; it reads ILLLLYSIGLYSEAFFNVLLT. At 132 to 150 the chain is on the cytoplasmic side; sequence VQRYKEFFHVRRRFSACRT. The chain crosses the membrane as a helical span at residues 151 to 171; it reads VAGSIFISVLVWVTATLVTLP. Topologically, residues 172-204 are extracellular; that stretch reads ELVSYKPQMQSQKYKCFFTGLHFLPADETFWKH. The helical transmembrane segment at 205-225 threads the bilayer; it reads FLTLKMNILGFLLPLFAFVYC. Topologically, residues 226–244 are cytoplasmic; it reads YVRMRKTLQFRERNYGLFK. Residues 245-265 form a helical membrane-spanning segment; the sequence is LVFTIMAVFLLMWGPYNIVLF. Residues 266–292 lie on the Extracellular side of the membrane; that stretch reads LSAFNEHFSLHGCGSSYNLNKSVQITR. A glycan (N-linked (GlcNAc...) asparagine) is linked at Asn285. The chain crosses the membrane as a helical span at residues 293 to 313; sequence IIAATHCCVNPLLYVFLDKAF. Residues 314–348 are Cytoplasmic-facing; the sequence is RKHLCHLFYLCSDTAPQPTEEPAQGASGEEYHLSS.

It belongs to the G-protein coupled receptor 1 family.

It localises to the cell membrane. Its function is as follows. Receptor for CCL19 and chemerin/RARRES2. Does not appear to be a signaling receptor, but may have a role in modulating chemokine-triggered immune responses by capturing and internalizing CCL19 or by presenting RARRES2 ligand to CMKLR1, a functional signaling receptor. Plays a critical role for the development of Th2 responses. The chain is Chemokine C-C motif receptor-like 2 (CCRL2) from Bos taurus (Bovine).